We begin with the raw amino-acid sequence, 68 residues long: UPF0435 protein SA1696 (68 aa).

It belongs to the UPF0435 family.

The protein is UPF0435 protein SA1696 of Staphylococcus aureus (strain N315).